The chain runs to 156 residues: Mitochondrial intermembrane space cysteine motif-containing protein MIX17 (156 aa).

A mitochondrion-targeting transit peptide spans 1 to 21 (MARSRGSSRPISRSRPTQTRS). Residues 1 to 21 (MARSRGSSRPISRSRPTQTRS) show a composition bias toward low complexity. Disordered stretches follow at residues 1 to 50 (MARS…GAQT) and 78 to 110 (AGIT…QTQT). Residues 84 to 110 (FSGSGSDSAPVEQQQQNMANTSGQTQT) show a composition bias toward polar residues. Residues 115–156 (GRTCEIDARNFTRCLDENNGNFQICDYYLQQLKACQEAARQY) enclose the CHCH domain. The Cx9C motif motif lies at 118–128 (CEIDARNFTRC). Intrachain disulfides connect cysteine 118–cysteine 149 and cysteine 128–cysteine 139.

It localises to the mitochondrion intermembrane space. The polypeptide is Mitochondrial intermembrane space cysteine motif-containing protein MIX17 (MIX17) (Saccharomyces cerevisiae (strain ATCC 204508 / S288c) (Baker's yeast)).